Reading from the N-terminus, the 30-residue chain is GIPCAESCVYIPCTITALLGCKCKDQVCYN.

The segment at residues G1–N30 is a cross-link (cyclopeptide (Gly-Asn)). Cystine bridges form between C4–C21, C8–C23, and C13–C28.

Post-translationally, this is a cyclic peptide.

Its function is as follows. Probably participates in a plant defense mechanism. The chain is Kalata-B17 from Oldenlandia affinis.